A 200-amino-acid chain; its full sequence is Holliday junction branch migration complex subunit RuvA (200 aa).

The interval 1–65 (MYEYIKGTLT…ETEHVLYGFS (65 aa)) is domain I. The tract at residues 66–144 (SRAERECFRL…TLMPLYLEEP (79 aa)) is domain II. The tract at residues 145–149 (VVPSS) is flexible linker. The interval 150–200 (TANSSFKEGIGALMNLGFSRLAADRMMTEAVKELSEEASVAELLPIALRKS) is domain III.

The protein belongs to the RuvA family. As to quaternary structure, homotetramer. Forms an RuvA(8)-RuvB(12)-Holliday junction (HJ) complex. HJ DNA is sandwiched between 2 RuvA tetramers; dsDNA enters through RuvA and exits via RuvB. An RuvB hexamer assembles on each DNA strand where it exits the tetramer. Each RuvB hexamer is contacted by two RuvA subunits (via domain III) on 2 adjacent RuvB subunits; this complex drives branch migration. In the full resolvosome a probable DNA-RuvA(4)-RuvB(12)-RuvC(2) complex forms which resolves the HJ.

The protein localises to the cytoplasm. Its function is as follows. The RuvA-RuvB-RuvC complex processes Holliday junction (HJ) DNA during genetic recombination and DNA repair, while the RuvA-RuvB complex plays an important role in the rescue of blocked DNA replication forks via replication fork reversal (RFR). RuvA specifically binds to HJ cruciform DNA, conferring on it an open structure. The RuvB hexamer acts as an ATP-dependent pump, pulling dsDNA into and through the RuvAB complex. HJ branch migration allows RuvC to scan DNA until it finds its consensus sequence, where it cleaves and resolves the cruciform DNA. The protein is Holliday junction branch migration complex subunit RuvA of Chlamydia trachomatis serovar D (strain ATCC VR-885 / DSM 19411 / UW-3/Cx).